Consider the following 279-residue polypeptide: Acetylglutamate kinase (279 aa).

Residues 64–65, Arg-86, and Asn-177 each bind substrate; that span reads GG.

The protein belongs to the acetylglutamate kinase family. ArgB subfamily.

It is found in the cytoplasm. It carries out the reaction N-acetyl-L-glutamate + ATP = N-acetyl-L-glutamyl 5-phosphate + ADP. It functions in the pathway amino-acid biosynthesis; L-arginine biosynthesis; N(2)-acetyl-L-ornithine from L-glutamate: step 2/4. Functionally, catalyzes the ATP-dependent phosphorylation of N-acetyl-L-glutamate. The protein is Acetylglutamate kinase of Campylobacter jejuni subsp. jejuni serotype O:2 (strain ATCC 700819 / NCTC 11168).